Consider the following 85-residue polypeptide: Small ribosomal subunit protein bS20 (85 aa).

The protein belongs to the bacterial ribosomal protein bS20 family.

Functionally, binds directly to 16S ribosomal RNA. The sequence is that of Small ribosomal subunit protein bS20 from Borrelia turicatae (strain 91E135).